The chain runs to 190 residues: UPF0301 protein Pfl01_5311 (190 aa).

The protein belongs to the UPF0301 (AlgH) family.

The sequence is that of UPF0301 protein Pfl01_5311 from Pseudomonas fluorescens (strain Pf0-1).